Consider the following 566-residue polypeptide: Arginine--tRNA ligase (566 aa).

Positions 123–133 (PNVAKPFHVGH) match the 'HIGH' region motif.

It belongs to the class-I aminoacyl-tRNA synthetase family. In terms of assembly, monomer.

It localises to the cytoplasm. It catalyses the reaction tRNA(Arg) + L-arginine + ATP = L-arginyl-tRNA(Arg) + AMP + diphosphate. The polypeptide is Arginine--tRNA ligase (Alkaliphilus metalliredigens (strain QYMF)).